An 870-amino-acid chain; its full sequence is Dynamin-2 (870 aa).

The Dynamin-type G domain occupies 28–294 (HLDLPQIAVV…LTNHIRESLP (267 aa)). Residues 38-45 (GGQSAGKS) form a G1 motif region. Positions 41, 43, 44, 45, 46, 59, and 60 each coordinate GDP. Positions 64-66 (VTR) are G2 motif. Positions 136 to 139 (DLPG) are G3 motif. The interval 205 to 208 (TKLD) is G4 motif. Residues lysine 206, aspartate 208, and aspartate 211 each contribute to the GDP site. At tyrosine 231 the chain carries Phosphotyrosine; by SRC. Residues 235–238 (VNRS) form a G5 motif region. Residues asparagine 236, arginine 237, and glutamine 239 each coordinate GDP. Lysine 299 is modified (N6-acetyllysine). The PH domain occupies 519–625 (LVIRRGWLTI…WKASFLRAGV (107 aa)). Tyrosine 597 is modified (phosphotyrosine; by SRC). An N6-acetyllysine modification is found at lysine 598. A GED domain is found at 653–744 (VETIRNLVDS…IIGDISTSTV (92 aa)). The interval 741–870 (TSTVSTPVPP…IRPAEPSLLD (130 aa)) is disordered. Threonine 755 carries the post-translational modification Phosphothreonine. Polar residues predominate over residues 756-767 (WLQSASSHSPTP). Position 764 is a phosphoserine; by CDK1 (serine 764). Residues 796–806 (VPVGAAASFSA) show a composition bias toward low complexity. The segment covering 826–855 (PAPPQIPSRPVRIPPGIPPGVPSRRPPAAP) has biased composition (pro residues). Residue serine 848 is modified to Phosphoserine; by GSK3-alpha.

Belongs to the TRAFAC class dynamin-like GTPase superfamily. Dynamin/Fzo/YdjA family. In terms of assembly, oligomerizes into a helical polymer that self-assembles around the vesicle membrane, when associated to the menbrane through lipid binding. Interacts with SHANK1 and SHANK2. Interacts with SNX9. Interacts (via C-terminal proline-rich domain (PRD)) with SNX18 (via SH3 domain); this interaction regulates ATG9A and ATG16L1 trafficking from recycling endosomes to sites of autophagosome formation. Interacts with SNX33 (via SH3 domain). Interacts with MYO1E (via SH3 domain). Interacts with PSTPIP1 (via SH3 domain). Interacts with CTNND2. Interacts (via C-terminal proline-rich domain (PRD)) with BIN1 (via SH3 domain); this interaction allows the recruitment of DNM2 to the membrane tubules and inhibits self-assembly-stimulated GTPase activity on the membrane. Interacts with GABARAP, GABARAPL1 and GABARAPL2. Interacts with MAP1LC3B (the lipidate and non-lipidated LC3 form); this interaction mediates recycling endosome scission leading to autophagosome release. Interacts with ITSN1. Interacts (via C-terminal proline-rich domain (PRD)) with SH3BP4 (via SH3 domain); this interaction controls the GTPase activity and is prevented by EGFR-induced tyrosine phosphorylation of either DNM2 or SH3BP4. May interact with PIK3C3. May be a component of a complex composed of RAB5A (in GDP-bound form), DYN2 and PIK3C3. Interacts with SDC4; this interaction is markedly enhanced at focal ahesion site upon induction of focal adhesions and stress-fiber formation. Interacts with ACTN1. Interacts with CTTN; this interaction stimulates the intrinsic GTPase activity of DNM2 and stabilizes the association of DNM2 and actin filaments; in addition this interaction is stimulated by ligand binding to the receptor, leading to the recruitment of the DNM2-CTTN complex to the sequestered receptor-ligand complex to its internalization. Interacts with NOSTRIN (via SH3 domain); this interaction allows the recruitment of NOS3 to dynamin-positive structures. Interacts with TUBG1; this interaction may participate in centrosome cohesion. In terms of processing, phosphorylation at Ser-848 by GSK3-alpha relieves the inhibition of BIN1 and promotes endocytosis. Phosphorylation at Ser-764 by CDK1 is greatly increased upon mitotic entry. It regulates cytokinesis downstream of calcineurin, and does not affect clathrin-mediated endocytosis. Dephosphorylated by calcineurin/PP2 during cytokinesis in a Ca(2+)- and calmodulin-dependent manner. Phosphorylated on tyrosine residues by EGFR and after activation of SRC. Widely expressed. Expressed in skeletal muscle and the peripheral nerve.

The protein resides in the cytoplasm. It localises to the cytoskeleton. It is found in the cytoplasmic vesicle. Its subcellular location is the clathrin-coated vesicle. The protein localises to the cell projection. The protein resides in the uropodium. It localises to the endosome. It is found in the microtubule organizing center. Its subcellular location is the centrosome. The protein localises to the centriole. The protein resides in the recycling endosome. It localises to the phagocytic cup. It is found in the phagosome membrane. Its subcellular location is the podosome. The protein localises to the cell junction. The protein resides in the postsynaptic density. It localises to the synapse. It is found in the synaptosome. Its subcellular location is the midbody. The protein localises to the membrane. The protein resides in the clathrin-coated pit. The catalysed reaction is GTP + H2O = GDP + phosphate + H(+). Catalyzes the hydrolysis of GTP and utilizes this energy to mediate vesicle scission at plasma membrane during endocytosis and filament remodeling at many actin structures during organization of the actin cytoskeleton. Plays an important role in vesicular trafficking processes, namely clathrin-mediated endocytosis (CME), exocytic and clathrin-coated vesicle from the trans-Golgi network, and PDGF stimulated macropinocytosis. During vesicular trafficking process, associates to the membrane, through lipid binding, and self-assembles into ring-like structure through oligomerization to form a helical polymer around the vesicle membrane and leading to vesicle scission. Plays a role in organization of the actin cytoskeleton by mediating arrangement of stress fibers and actin bundles in podocytes. During organization of the actin cytoskeleton, self-assembles into ring-like structure that directly bundles actin filaments to form typical membrane tubules decorated with dynamin spiral polymers. Self-assembly increases GTPase activity and the GTP hydrolysis causes the rapid depolymerization of dynamin spiral polymers, and results in dispersion of actin bundles. Remodels, through its interaction with CTTN, bundled actin filaments in a GTPase-dependent manner and plays a role in orchestrating the global actomyosin cytoskeleton. The interaction with CTTN stabilizes the interaction of DNM2 and actin filaments and stimulates the intrinsic GTPase activity that results in actin filament-barbed ends and increases the sensitivity of filaments in bundles to the actin depolymerizing factor, CFL1. Plays a role in the autophagy process, by participating in the formation of ATG9A vesicles destined for the autophagosomes through its interaction with SNX18, by mediating recycling endosome scission leading to autophagosome release through MAP1LC3B interaction. Also regulates maturation of apoptotic cell corpse-containing phagosomes by recruiting PIK3C3 to the phagosome membrane. Also plays a role in cytokinesis. May participate in centrosome cohesion through its interaction with TUBG1. Plays a role in the regulation of neuron morphology, axon growth and formation of neuronal growth cones. Involved in membrane tubulation. This Homo sapiens (Human) protein is Dynamin-2.